Consider the following 213-residue polypeptide: Pyrrolidone-carboxylate peptidase (213 aa).

Residues E81, C144, and H166 contribute to the active site.

This sequence belongs to the peptidase C15 family. In terms of assembly, homotetramer.

The protein resides in the cytoplasm. It catalyses the reaction Release of an N-terminal pyroglutamyl group from a polypeptide, the second amino acid generally not being Pro.. Its function is as follows. Removes 5-oxoproline from various penultimate amino acid residues except L-proline. The polypeptide is Pyrrolidone-carboxylate peptidase (Pseudomonas fluorescens (strain SBW25)).